A 922-amino-acid polypeptide reads, in one-letter code: Eukaryotic translation initiation factor 3 subunit C (922 aa).

2 disordered regions span residues 1–37 and 154–308; these read MSRF…QPII and APIA…KVKG. The span at 8–21 shows a compositional bias: low complexity; sequence GSDSESESSLSGDE. Over residues 165-189 the composition is skewed to acidic residues; the sequence is ESADEDQEKDEDSEASSSSDDDSDE. Residues 207-216 are compositionally biased toward basic and acidic residues; that stretch reads SRSKFLKKEE. Acidic residues predominate over residues 217-243; that stretch reads AEDEESSSDDEDWGSDSDESDSDESDD. Basic and acidic residues predominate over residues 258–275; sequence TVNEGDRQAAEKKKEEKA. The segment covering 289–301 has biased composition (acidic residues); it reads EGEEEEDDNEGGG. The 177-residue stretch at 674–850 folds into the PCI domain; it reads FHMHINLELL…QTVVMHGTEP (177 aa). A disordered region spans residues 885–922; the sequence is YFNRGDRGDRDQKDQYQRKEGGYMRRGYRRDQQGQSNY. Positions 888 to 907 are enriched in basic and acidic residues; that stretch reads RGDRGDRDQKDQYQRKEGGY.

The protein belongs to the eIF-3 subunit C family. As to quaternary structure, component of the eukaryotic translation initiation factor 3 (eIF-3) complex, which is composed of 13 subunits: eif3a, eif3b, eif3c, eif3d, eif3e, eif3f, eif3g, eif3h, eif3i, eif3j, eif3k, eif3l and eif3m.

The protein resides in the cytoplasm. Functionally, component of the eukaryotic translation initiation factor 3 (eIF-3) complex, which is involved in protein synthesis of a specialized repertoire of mRNAs and, together with other initiation factors, stimulates binding of mRNA and methionyl-tRNAi to the 40S ribosome. The eIF-3 complex specifically targets and initiates translation of a subset of mRNAs involved in cell proliferation. This is Eukaryotic translation initiation factor 3 subunit C (eif3c) from Xenopus tropicalis (Western clawed frog).